We begin with the raw amino-acid sequence, 547 residues long: uncharacterized protein (547 aa).

The Cytoplasmic portion of the chain corresponds to methionine 1–arginine 19. A helical transmembrane segment spans residues proline 20–serine 40. Residues serine 41–threonine 64 lie on the Vacuolar side of the membrane. The chain crosses the membrane as a helical span at residues phenylalanine 65–isoleucine 85. At asparagine 86–phenylalanine 89 the chain is on the cytoplasmic side. A helical membrane pass occupies residues leucine 90–isoleucine 110. The Vacuolar segment spans residues glycine 111–alanine 139. The helical transmembrane segment at tyrosine 140–phenylalanine 160 threads the bilayer. Residues asparagine 161–glutamine 340 are Cytoplasmic-facing. Phosphoserine is present on serine 225. The interval proline 237–aspartate 271 is disordered. The segment covering arginine 242–glutamine 253 has biased composition (polar residues). Residues leucine 341–glycine 361 traverse the membrane as a helical segment. Residues glutamate 362–asparagine 394 lie on the Vacuolar side of the membrane. Residues phenylalanine 395–tyrosine 415 traverse the membrane as a helical segment. Residues leucine 416–serine 523 lie on the Cytoplasmic side of the membrane. Residues phenylalanine 524–threonine 544 form a helical membrane-spanning segment. Residues valine 545–isoleucine 547 lie on the Vacuolar side of the membrane.

It localises to the vacuole membrane. This is an uncharacterized protein from Saccharomyces cerevisiae (strain ATCC 204508 / S288c) (Baker's yeast).